A 2059-amino-acid chain; its full sequence is DNA polymerase theta (2059 aa).

A disordered region spans residues 25–45; that stretch reads DKENAQPGNGNIQVQSAGNEV. Residues 30-45 show a composition bias toward polar residues; the sequence is QPGNGNIQVQSAGNEV. A Helicase ATP-binding domain is found at 243–416; the sequence is PRLLFEHCNL…WLDAELYITN (174 aa). 256 to 263 is a binding site for ATP; sequence APTSAGKT. Positions 357–360 match the DEAH box motif; sequence DEVH. The Helicase C-terminal domain maps to 464–666; it reads CIETLLEGCS…HLKRALLEVI (203 aa). 4 disordered regions span residues 1052–1073, 1168–1190, 1204–1274, and 1330–1372; these read PPVK…KNPR, PQLA…VNEG, QRTQ…SRKV, and PHAS…GVSS. The span at 1062–1071 shows a compositional bias: polar residues; sequence ENGTANSQKN. The span at 1213 to 1274 shows a compositional bias: polar residues; that stretch reads KDQPIQASRS…NANRTASRKV (62 aa). The span at 1355-1365 shows a compositional bias: basic and acidic residues; that stretch reads REIEIDLESKN.

Belongs to the DNA polymerase type-A family. Requires Mg(2+) as cofactor. In terms of processing, in adult males, cleaved to produce a 100 kDa form. Expressed in ovaries (at protein level).

Its subcellular location is the nucleus. It catalyses the reaction DNA(n) + a 2'-deoxyribonucleoside 5'-triphosphate = DNA(n+1) + diphosphate. Its activity is regulated as follows. Resistant to aphidicolin, but sensitive to dideoxythymindine triphosphate (ddTTP) and N-ethyl malemide (NEM). Multifunctional protein with both DNA polymerase and ATPase activities. Might have 3' to 5' exonuclease activity. Plays a role in different DNA repair pathways such as DNA strand cross-link repair and microhomology-mediated end-joining (MMEJ), an alternative non-homologous end-joining (NHEJ) machinery triggered in response to double-strand breaks. MMEJ is an error-prone repair pathway that produces deletions of sequences from the strand being repaired and promotes genomic rearrangements, such as telomere fusions. Utilizes short microhomologies present in partially and fully single-stranded DNA (ssDNA) as primers for DNA synthesis. Prefers poly(dA)/oligo(dT) as a template-primer. The ATPase activity is necessary during interstrand cross-link (ICL) repair and has a critical role in generating templated insertions during MMEJ. Necessary for processing DNA damage induced by oxygen and N-ethylation. In follicle cells, contributes to double-strand break repair at physiological rereplication forks necessary for survival of fertilized eggs. The chain is DNA polymerase theta from Drosophila melanogaster (Fruit fly).